A 493-amino-acid chain; its full sequence is Adenylyltransferase and sulfurtransferase uba4 (493 aa).

ATP-binding positions include glycine 99, aspartate 120, 127–131, lysine 144, and 188–189; these read SNLHR and DN. Zn(2+) is bound by residues cysteine 237 and cysteine 240. The Glycyl thioester intermediate; for adenylyltransferase activity role is filled by cysteine 254. Zn(2+) contacts are provided by cysteine 316 and cysteine 319. The 116-residue stretch at 376–491 folds into the Rhodanese domain; it reads INKEPTIIDV…WREQIDPDWP (116 aa). Residue cysteine 446 is the Cysteine persulfide intermediate; for sulfurtransferase activity of the active site.

In the N-terminal section; belongs to the HesA/MoeB/ThiF family. UBA4 subfamily. The cofactor is Zn(2+).

It localises to the cytoplasm. It is found in the cytosol. It catalyses the reaction [molybdopterin-synthase sulfur-carrier protein]-C-terminal Gly-Gly + ATP + H(+) = [molybdopterin-synthase sulfur-carrier protein]-C-terminal Gly-Gly-AMP + diphosphate. The catalysed reaction is [molybdopterin-synthase sulfur-carrier protein]-C-terminal Gly-Gly-AMP + S-sulfanyl-L-cysteinyl-[cysteine desulfurase] + AH2 = [molybdopterin-synthase sulfur-carrier protein]-C-terminal-Gly-aminoethanethioate + L-cysteinyl-[cysteine desulfurase] + A + AMP + 2 H(+). It participates in tRNA modification; 5-methoxycarbonylmethyl-2-thiouridine-tRNA biosynthesis. It functions in the pathway cofactor biosynthesis; molybdopterin biosynthesis. Its function is as follows. Plays a central role in 2-thiolation of mcm(5)S(2)U at tRNA wobble positions of cytosolic tRNA(Lys), tRNA(Glu) and tRNA(Gln). Also essential during biosynthesis of the molybdenum cofactor. Acts by mediating the C-terminal thiocarboxylation of sulfur carriers urm1 and mocs2a. Its N-terminus first activates urm1 and mocs2a as acyl-adenylates (-COAMP), then the persulfide sulfur on the catalytic cysteine is transferred to urm1 and mocs2a to form thiocarboxylation (-COSH) of their C-terminus. The reaction probably involves hydrogen sulfide that is generated from the persulfide intermediate and that acts as a nucleophile towards urm1 and mocs2a. Subsequently, a transient disulfide bond is formed. Does not use thiosulfate as sulfur donor; nfs1 probably acting as a sulfur donor for thiocarboxylation reactions. This chain is Adenylyltransferase and sulfurtransferase uba4, found in Aspergillus fumigatus (strain ATCC MYA-4609 / CBS 101355 / FGSC A1100 / Af293) (Neosartorya fumigata).